The following is a 101-amino-acid chain: Urease subunit beta (101 aa).

The protein belongs to the urease beta subunit family. Heterotrimer of UreA (gamma), UreB (beta) and UreC (alpha) subunits. Three heterotrimers associate to form the active enzyme.

It is found in the cytoplasm. The enzyme catalyses urea + 2 H2O + H(+) = hydrogencarbonate + 2 NH4(+). Its pathway is nitrogen metabolism; urea degradation; CO(2) and NH(3) from urea (urease route): step 1/1. The polypeptide is Urease subunit beta (Burkholderia multivorans (strain ATCC 17616 / 249)).